A 123-amino-acid chain; its full sequence is Small ribosomal subunit protein uS12 (123 aa).

Positions 10–20 (KGRKKVKKKKT) are enriched in basic residues. A disordered region spans residues 10–32 (KGRKKVKKKKTAPALQGSPQKRG). Asp-89 carries the 3-methylthioaspartic acid modification.

The protein belongs to the universal ribosomal protein uS12 family. As to quaternary structure, part of the 30S ribosomal subunit. Contacts proteins S8 and S17. May interact with IF1 in the 30S initiation complex.

With S4 and S5 plays an important role in translational accuracy. Functionally, interacts with and stabilizes bases of the 16S rRNA that are involved in tRNA selection in the A site and with the mRNA backbone. Located at the interface of the 30S and 50S subunits, it traverses the body of the 30S subunit contacting proteins on the other side and probably holding the rRNA structure together. The combined cluster of proteins S8, S12 and S17 appears to hold together the shoulder and platform of the 30S subunit. The polypeptide is Small ribosomal subunit protein uS12 (Halothermothrix orenii (strain H 168 / OCM 544 / DSM 9562)).